The chain runs to 346 residues: Inositol 2-dehydrogenase/D-chiro-inositol 3-dehydrogenase (346 aa).

Over residues 322–331 the composition is skewed to basic and acidic residues; sequence GREESIELPK. A disordered region spans residues 322 to 346; sequence GREESIELPKKPAFYQHSAATPEQV.

It belongs to the Gfo/Idh/MocA family. In terms of assembly, homotetramer.

It carries out the reaction myo-inositol + NAD(+) = scyllo-inosose + NADH + H(+). It catalyses the reaction 1D-chiro-inositol + NAD(+) = scyllo-inosine + NADH + H(+). It functions in the pathway polyol metabolism; myo-inositol degradation into acetyl-CoA; acetyl-CoA from myo-inositol: step 1/7. Involved in the oxidation of myo-inositol (MI) and D-chiro-inositol (DCI) to 2-keto-myo-inositol (2KMI or 2-inosose) and 1-keto-D-chiro-inositol (1KDCI), respectively. This chain is Inositol 2-dehydrogenase/D-chiro-inositol 3-dehydrogenase, found in Shouchella clausii (strain KSM-K16) (Alkalihalobacillus clausii).